The following is a 174-amino-acid chain: FMN-dependent NADPH-azoreductase (174 aa).

Residues 9-11, 15-16, 73-76, and glycine 106 each bind FMN; these read TPR, RT, and EYHS.

Belongs to the azoreductase type 2 family. Homotetramer. Requires FMN as cofactor.

Functionally, catalyzes the reductive cleavage of azo bond in aromatic azo compounds to the corresponding amines. Requires NADPH, but not NADH, as an electron donor for its activity. The chain is FMN-dependent NADPH-azoreductase (azr) from Bacillus subtilis (strain 168).